We begin with the raw amino-acid sequence, 409 residues long: Nucleoprotein (409 aa).

Disordered regions lie at residues 1–32, 44–63, 120–145, and 164–193; these read MASG…SSGN, LNSP…ENLK, GADT…LRFS, and RSGR…SGAE. Residues 15 to 31 show a composition bias toward low complexity; it reads PVIKLGGPKPPKVGSSG. The tract at residues 29–160 is RNA-binding; the sequence is SSGNASWFQA…GNFRWDFIPI (132 aa). The 126-residue stretch at 31–156 folds into the CoV N NTD domain; that stretch reads GNASWFQALK…GGPDGNFRWD (126 aa). Over residues 164 to 179 the composition is skewed to low complexity; it reads RSGRSTAASSAASSRA. The segment covering 180–192 has biased composition (basic and acidic residues); it reads PSRDGSRGRRSGA. At serine 190 the chain carries Phosphoserine; by host. A CoV N CTD domain is found at 215-331; it reads TKAKADEMAH…QCVDGVGTRP (117 aa). A dimerization region spans residues 226 to 333; the sequence is RYCKRTIPPG…VDGVGTRPKD (108 aa). Residues cysteine 320 and cysteine 323 are joined by a disulfide bond. The tract at residues 327–409 is disordered; sequence VGTRPKDDEP…GESALGENEL (83 aa). The span at 341–355 shows a compositional bias: polar residues; the sequence is RPNSRPATRTSSPAP. Residues 368–384 are compositionally biased toward basic and acidic residues; that stretch reads KQDDEVDKALTSDEERN. Residue threonine 378 is modified to Phosphothreonine; by host. Serine 379 carries the post-translational modification Phosphoserine; by host.

The protein belongs to the gammacoronavirus nucleocapsid protein family. As to quaternary structure, homooligomer. Both monomeric and oligomeric forms interact with RNA. Interacts with protein M. Interacts with NSP3; this interaction serves to tether the genome to the newly translated replicase-transcriptase complex at a very early stage of infection. In terms of processing, ADP-ribosylated. The ADP-ribosylation is retained in the virion during infection. Phosphorylated on serine and threonine residues.

The protein localises to the virion. The protein resides in the host endoplasmic reticulum-Golgi intermediate compartment. It is found in the host Golgi apparatus. Its function is as follows. Packages the positive strand viral genome RNA into a helical ribonucleocapsid (RNP) and plays a fundamental role during virion assembly through its interactions with the viral genome and membrane protein M. Plays an important role in enhancing the efficiency of subgenomic viral RNA transcription as well as viral replication. The polypeptide is Nucleoprotein (Avian infectious bronchitis virus (strain D1466) (IBV)).